We begin with the raw amino-acid sequence, 636 residues long: Threonine--tRNA ligase (636 aa).

Residues 1–61 (MPVITLPDGS…TQDASLQLIT (61 aa)) form the TGS domain. The interval 243–534 (DHRKIGKTLD…LIEEFTGKFP (292 aa)) is catalytic. 3 residues coordinate Zn(2+): Cys334, His385, and His511.

The protein belongs to the class-II aminoacyl-tRNA synthetase family. In terms of assembly, homodimer. Zn(2+) serves as cofactor.

The protein localises to the cytoplasm. The enzyme catalyses tRNA(Thr) + L-threonine + ATP = L-threonyl-tRNA(Thr) + AMP + diphosphate + H(+). Catalyzes the attachment of threonine to tRNA(Thr) in a two-step reaction: L-threonine is first activated by ATP to form Thr-AMP and then transferred to the acceptor end of tRNA(Thr). Also edits incorrectly charged L-seryl-tRNA(Thr). This chain is Threonine--tRNA ligase, found in Colwellia psychrerythraea (strain 34H / ATCC BAA-681) (Vibrio psychroerythus).